An 87-amino-acid polypeptide reads, in one-letter code: uncharacterized protein (87 aa).

Residues 52–87 (KWQPRPDANNSDTTTSTEDSTTDTETEYSTTEDELA) are disordered. Acidic residues predominate over residues 71–87 (STTDTETEYSTTEDELA).

This is an uncharacterized protein from Autographa californica nuclear polyhedrosis virus (AcMNPV).